The chain runs to 238 residues: Probable transcriptional regulatory protein IL0164 (238 aa).

The protein belongs to the TACO1 family.

It localises to the cytoplasm. This chain is Probable transcriptional regulatory protein IL0164, found in Idiomarina loihiensis (strain ATCC BAA-735 / DSM 15497 / L2-TR).